Reading from the N-terminus, the 249-residue chain is DNA repair protein RecO (249 aa).

It belongs to the RecO family.

In terms of biological role, involved in DNA repair and RecF pathway recombination. This is DNA repair protein RecO from Desulforudis audaxviator (strain MP104C).